The primary structure comprises 40 residues: Photosystem II reaction center protein J (40 aa).

Residues 8–28 (IPLWLIGTVTGIPVIGLIGIF) form a helical membrane-spanning segment.

The protein belongs to the PsbJ family. As to quaternary structure, PSII is composed of 1 copy each of membrane proteins PsbA, PsbB, PsbC, PsbD, PsbE, PsbF, PsbH, PsbI, PsbJ, PsbK, PsbL, PsbM, PsbT, PsbX, PsbY, PsbZ, Psb30/Ycf12, at least 3 peripheral proteins of the oxygen-evolving complex and a large number of cofactors. It forms dimeric complexes.

The protein resides in the plastid. Its subcellular location is the chloroplast thylakoid membrane. One of the components of the core complex of photosystem II (PSII). PSII is a light-driven water:plastoquinone oxidoreductase that uses light energy to abstract electrons from H(2)O, generating O(2) and a proton gradient subsequently used for ATP formation. It consists of a core antenna complex that captures photons, and an electron transfer chain that converts photonic excitation into a charge separation. The protein is Photosystem II reaction center protein J of Vitis vinifera (Grape).